The chain runs to 357 residues: Tetraacyldisaccharide 4'-kinase (357 aa).

S67 to T74 contacts ATP.

Belongs to the LpxK family.

It carries out the reaction a lipid A disaccharide + ATP = a lipid IVA + ADP + H(+). The protein operates within glycolipid biosynthesis; lipid IV(A) biosynthesis; lipid IV(A) from (3R)-3-hydroxytetradecanoyl-[acyl-carrier-protein] and UDP-N-acetyl-alpha-D-glucosamine: step 6/6. Transfers the gamma-phosphate of ATP to the 4'-position of a tetraacyldisaccharide 1-phosphate intermediate (termed DS-1-P) to form tetraacyldisaccharide 1,4'-bis-phosphate (lipid IVA). The sequence is that of Tetraacyldisaccharide 4'-kinase from Syntrophotalea carbinolica (strain DSM 2380 / NBRC 103641 / GraBd1) (Pelobacter carbinolicus).